Reading from the N-terminus, the 419-residue chain is Coiled-coil domain-containing protein 85C (419 aa).

A2 is modified (N-acetylalanine). 2 coiled-coil regions span residues 22-88 (ELLR…RELC) and 118-159 (HEVA…AALA). Disordered stretches follow at residues 162–268 (GAAS…DPSS) and 307–348 (HSES…AGQK). Positions 164 to 175 (ASGGGGGGGGAG) are enriched in gly residues. Residues 176 to 189 (SRSSIDSQASLSGP) show a composition bias toward low complexity. The residue at position 178 (S178) is a Phosphoserine. The span at 224 to 233 (PPPLLPPGPH) shows a compositional bias: pro residues. A Phosphoserine modification is found at S246. The segment covering 307–325 (HSESQLASLPPSYQDSLQN) has biased composition (polar residues). The span at 329 to 338 (CPAPELPSPP) shows a compositional bias: pro residues.

This sequence belongs to the CCDC85 family. As to quaternary structure, may interact with ARVCF, CTNND1, CTNND2 and PKP4.

The protein localises to the cell junction. It is found in the tight junction. The protein resides in the adherens junction. Functionally, may play a role in cell-cell adhesion and epithelium development through its interaction with proteins of the beta-catenin family. May play an important role in cortical development, especially in the maintenance of radial glia. The sequence is that of Coiled-coil domain-containing protein 85C (CCDC85C) from Homo sapiens (Human).